Here is a 292-residue protein sequence, read N- to C-terminus: 4-diphosphocytidyl-2-C-methyl-D-erythritol kinase (292 aa).

K20 is a catalytic residue. An ATP-binding site is contributed by 103 to 113; sequence PMGGGIGGGSS. D145 is an active-site residue.

It belongs to the GHMP kinase family. IspE subfamily.

The catalysed reaction is 4-CDP-2-C-methyl-D-erythritol + ATP = 4-CDP-2-C-methyl-D-erythritol 2-phosphate + ADP + H(+). The protein operates within isoprenoid biosynthesis; isopentenyl diphosphate biosynthesis via DXP pathway; isopentenyl diphosphate from 1-deoxy-D-xylulose 5-phosphate: step 3/6. In terms of biological role, catalyzes the phosphorylation of the position 2 hydroxy group of 4-diphosphocytidyl-2C-methyl-D-erythritol. The protein is 4-diphosphocytidyl-2-C-methyl-D-erythritol kinase of Cupriavidus metallidurans (strain ATCC 43123 / DSM 2839 / NBRC 102507 / CH34) (Ralstonia metallidurans).